The chain runs to 496 residues: uncharacterized protein (496 aa).

Residues 1–19 form the signal peptide; it reads MTTGYILIAAILILGGVIA. Residues 45–67 form a helical membrane-spanning segment; the sequence is AVLVTILTGGLVSATTLAILFIA. The disordered stretch occupies residues 113-137; it reads LETTRTDKKQVETQRDQAKKEKLKA.

The protein localises to the membrane. This is an uncharacterized protein from Nostoc sp. (strain PCC 7120 / SAG 25.82 / UTEX 2576).